Here is a 473-residue protein sequence, read N- to C-terminus: Ribulose bisphosphate carboxylase large chain (473 aa).

The propeptide occupies 1-2; it reads MS. Substrate contacts are provided by N123 and T173. The Proton acceptor role is filled by K175. Substrate is bound at residue K177. 3 residues coordinate Mg(2+): K201, D203, and E204. K201 carries the N6-carboxylysine modification. Phosphoserine is present on S208. H294 (proton acceptor) is an active-site residue. Substrate is bound by residues R295 and H327. T330 carries the phosphothreonine modification. S379 provides a ligand contact to substrate.

The protein belongs to the RuBisCO large chain family. Type I subfamily. As to quaternary structure, heterohexadecamer of 8 large chains and 8 small chains; disulfide-linked. The disulfide link is formed within the large subunit homodimers. Mg(2+) serves as cofactor. Post-translationally, the disulfide bond which can form in the large chain dimeric partners within the hexadecamer appears to be associated with oxidative stress and protein turnover.

It is found in the plastid. The protein resides in the chloroplast. The enzyme catalyses 2 (2R)-3-phosphoglycerate + 2 H(+) = D-ribulose 1,5-bisphosphate + CO2 + H2O. It carries out the reaction D-ribulose 1,5-bisphosphate + O2 = 2-phosphoglycolate + (2R)-3-phosphoglycerate + 2 H(+). In terms of biological role, ruBisCO catalyzes two reactions: the carboxylation of D-ribulose 1,5-bisphosphate, the primary event in carbon dioxide fixation, as well as the oxidative fragmentation of the pentose substrate in the photorespiration process. Both reactions occur simultaneously and in competition at the same active site. The sequence is that of Ribulose bisphosphate carboxylase large chain from Sinapis alba (White mustard).